A 195-amino-acid chain; its full sequence is UPF0167 protein CbrC (195 aa).

It belongs to the UPF0167 family.

This Escherichia coli (strain K12) protein is UPF0167 protein CbrC (cbrC).